The sequence spans 117 residues: Large ribosomal subunit protein bL20 (117 aa).

Belongs to the bacterial ribosomal protein bL20 family.

In terms of biological role, binds directly to 23S ribosomal RNA and is necessary for the in vitro assembly process of the 50S ribosomal subunit. It is not involved in the protein synthesizing functions of that subunit. The protein is Large ribosomal subunit protein bL20 of Leptospira biflexa serovar Patoc (strain Patoc 1 / Ames).